The chain runs to 128 residues: Fluoride-specific ion channel FluC (128 aa).

4 helical membrane-spanning segments follow: residues 5-25, 35-55, 67-87, and 96-116; these read IVAI…LGLA, LGTL…AVVF, LFVI…SVEV, and FGWA…LTAL. Na(+) is bound by residues glycine 75 and threonine 78.

This sequence belongs to the fluoride channel Fluc/FEX (TC 1.A.43) family.

It localises to the cell inner membrane. It catalyses the reaction fluoride(in) = fluoride(out). Its activity is regulated as follows. Na(+) is not transported, but it plays an essential structural role and its presence is essential for fluoride channel function. Fluoride-specific ion channel. Important for reducing fluoride concentration in the cell, thus reducing its toxicity. This Burkholderia vietnamiensis (strain G4 / LMG 22486) (Burkholderia cepacia (strain R1808)) protein is Fluoride-specific ion channel FluC.